The sequence spans 418 residues: AA14 family lytic polysaccharide monooxygenase B (418 aa).

The N-terminal stretch at 1–18 (MIPVFLAAVAAFLPLTSG) is a signal peptide. Residues Asn31, Asn94, and Asn151 are each glycosylated (N-linked (GlcNAc...) asparagine). Disulfide bonds link Cys85/Cys108, Cys127/Cys154, Cys171/Cys176, and Cys178/Cys200. Residues Asn201 and Asn235 are each glycosylated (N-linked (GlcNAc...) asparagine). Cys220 and Cys236 are joined by a disulfide. Over residues 307-343 (AAATPAPSSSGSSPSSSSPGSSSTASTTSTSGPRPSA) the composition is skewed to low complexity. Positions 307–364 (AAATPAPSSSGSSPSSSSPGSSSTASTTSTSGPRPSARGFRRSTGERPPTGVPTPRKS) are disordered.

The protein belongs to the polysaccharide monooxygenase AA14 family. Requires Cu(2+) as cofactor.

The protein resides in the secreted. Lytic polysaccharide monooxygenase (LPMO) that oxidatively cleaves xylan with both C1 and C4 regioselectivity and that specifically targets the protective shield made by heteroxylans that cover cellulose microfibrils in wood. Catalysis by LPMOs requires the reduction of the active-site copper from Cu(II) to Cu(I) by a reducing agent and H(2)O(2) or O(2) as a cosubstrate. Cleavage occurs only when xylans are bound to cellulose and not when they are in solution. Increases the efficiency of wood saccharification through oxidative cleavage of highly refractory xylan-coated cellulose fibers via synergistic relationship with xylan-active enzymes, xylobiohydrolases and cellobiohydrolases. The chain is AA14 family lytic polysaccharide monooxygenase B from Trametes coccinea (strain BRFM310) (Pycnoporus coccineus).